A 1039-amino-acid chain; its full sequence is uncharacterized protein (1039 aa).

The span at 1–19 shows a compositional bias: basic residues; the sequence is MSLLMAHRKSKSSQRKLRN. The interval 1–38 is disordered; it reads MSLLMAHRKSKSSQRKLRNRSSSLTPQKRRIRASKGSH.

This is an uncharacterized protein from Sinorhizobium fredii (strain NBRC 101917 / NGR234).